A 357-amino-acid polypeptide reads, in one-letter code: Neutral protease 2 homolog UREG_02006 (357 aa).

The signal sequence occupies residues 1-19 (MLFSSRFLALAALLGQALA). Positions 20–179 (LPIDDFSQSD…QSAVPTIEKR (160 aa)) are excised as a propeptide. Intrachain disulfides connect cysteine 187–cysteine 259 and cysteine 266–cysteine 284. Histidine 308 is a Zn(2+) binding site. Glutamate 309 is a catalytic residue. Zn(2+)-binding residues include histidine 312 and aspartate 323.

Belongs to the peptidase M35 family. The cofactor is Zn(2+).

The protein localises to the secreted. The catalysed reaction is Preferential cleavage of bonds with hydrophobic residues in P1'. Also 3-Asn-|-Gln-4 and 8-Gly-|-Ser-9 bonds in insulin B chain.. In terms of biological role, secreted metalloproteinase that allows assimilation of proteinaceous substrates. Shows high activities on basic nuclear substrates such as histone and protamine. The chain is Neutral protease 2 homolog UREG_02006 from Uncinocarpus reesii (strain UAMH 1704).